The chain runs to 82 residues: Immediate early response 3-interacting protein 1 (82 aa).

The next 2 helical transmembrane spans lie at 2 to 22 (AFTL…IAVL) and 62 to 82 (VMRV…LLFG).

It belongs to the YOS1 family.

The protein localises to the endoplasmic reticulum membrane. In terms of biological role, regulator of endoplasmic reticulum secretion that acts as a key determinant of brain size. Required for secretion of extracellular matrix proteins. Required for correct brain development by depositing sufficient extracellular matrix proteins for tissue integrity and the proliferation of neural progenitors. Acts as a regulator of the unfolded protein response (UPR). The protein is Immediate early response 3-interacting protein 1 of Bos taurus (Bovine).